Consider the following 162-residue polypeptide: MNTKFPITAKGFKKLEHELKHLKHVERKKISEDIAEAREHGDLSENAEYEAAREKQAFIEGRIKELEDMTARAEIIDICKLSGDNIKFGATVTLIDDDTEEEVTYVIVGEYEADITKKRVSIASPIAKALIGKSVGDFVEVITPKGLKSYEVVTVEYKELDL.

Residues E45 to E74 adopt a coiled-coil conformation.

It belongs to the GreA/GreB family.

Functionally, necessary for efficient RNA polymerase transcription elongation past template-encoded arresting sites. The arresting sites in DNA have the property of trapping a certain fraction of elongating RNA polymerases that pass through, resulting in locked ternary complexes. Cleavage of the nascent transcript by cleavage factors such as GreA or GreB allows the resumption of elongation from the new 3'terminus. GreA releases sequences of 2 to 3 nucleotides. This chain is Transcription elongation factor GreA, found in Rickettsia typhi (strain ATCC VR-144 / Wilmington).